Reading from the N-terminus, the 375-residue chain is CMP-N-acetylneuraminate-beta-1,4-galactoside alpha-2,3-sialyltransferase (375 aa).

Residues Met-1 to Arg-8 are Cytoplasmic-facing. Residues Asn-9–Trp-28 traverse the membrane as a helical; Signal-anchor for type II membrane protein segment. The Lumenal portion of the chain corresponds to Lys-29 to Ile-375. Asn-80 and Asn-171 each carry an N-linked (GlcNAc...) asparagine glycan. Cys-160 and Cys-314 are disulfide-bonded.

The protein belongs to the glycosyltransferase 29 family. Post-translationally, the soluble form derives from the membrane form by proteolytic processing. As to expression, highly expressed in adult skeletal muscle and in all fetal tissues examined and to a much lesser extent in placenta, lung and liver.

The protein localises to the golgi apparatus. The protein resides in the golgi stack membrane. It localises to the secreted. The enzyme catalyses a beta-D-galactosyl-(1-&gt;4)-N-acetyl-beta-D-glucosaminyl derivative + CMP-N-acetyl-beta-neuraminate = an N-acetyl-alpha-neuraminyl-(2-&gt;3)-beta-D-galactosyl-(1-&gt;4)-N-acetyl-beta-D-glucosaminyl derivative + CMP + H(+). Its pathway is protein modification; protein glycosylation. Functionally, catalyzes the formation of the NeuAc-alpha-2,3-Gal-beta-1,4-GlcNAc-, NeuAc-alpha-2,3-Gal-beta-1,3-GlcNAc- and NeuAc-alpha-2,3-Gal-beta-1,3-GalNAc- sequences found in terminal carbohydrate groups of glycoproteins and glycolipids. The highest activity is toward Gal-beta-1,3-GlcNAc and the lowest toward Gal-beta-1,3-GalNAc. This Homo sapiens (Human) protein is CMP-N-acetylneuraminate-beta-1,4-galactoside alpha-2,3-sialyltransferase (ST3GAL3).